The sequence spans 466 residues: Cytochrome P450 85A1 (466 aa).

The helical transmembrane segment at 1–21 (MVLAVLIGVLVGIVLVSSLLL) threads the bilayer. Cys-416 is a heme binding site.

It belongs to the cytochrome P450 family. Heme is required as a cofactor.

It localises to the membrane. It catalyses the reaction 6-deoxoteasterone + reduced [NADPH--hemoprotein reductase] + O2 = 6alpha-hydroxyteasterone + oxidized [NADPH--hemoprotein reductase] + H2O + H(+). The catalysed reaction is 6alpha-hydroxytyphasterol + reduced [NADPH--hemoprotein reductase] + O2 = teasterone + oxidized [NADPH--hemoprotein reductase] + 2 H2O + H(+). It carries out the reaction 3-dehydro-6-deoxoteasterone + reduced [NADPH--hemoprotein reductase] + O2 = 3-dehydro-6alpha-hydroxyteasterone + oxidized [NADPH--hemoprotein reductase] + H2O + H(+). The enzyme catalyses 3-dehydro-6alpha-hydroxyteasterone + reduced [NADPH--hemoprotein reductase] + O2 = 3-dehydroteasterone + oxidized [NADPH--hemoprotein reductase] + 2 H2O + H(+). It catalyses the reaction 6-deoxotyphasterol + reduced [NADPH--hemoprotein reductase] + O2 = 6alpha-hydroxytyphasterol + oxidized [NADPH--hemoprotein reductase] + H2O + H(+). The catalysed reaction is 6alpha-hydroxytyphasterol + reduced [NADPH--hemoprotein reductase] + O2 = typhasterol + oxidized [NADPH--hemoprotein reductase] + 2 H2O + H(+). It carries out the reaction 6-deoxocastasterone + reduced [NADPH--hemoprotein reductase] + O2 = 6alpha-hydroxycastasterone + oxidized [NADPH--hemoprotein reductase] + H2O + H(+). The enzyme catalyses 6alpha-hydroxycastasterone + reduced [NADPH--hemoprotein reductase] + O2 = castasterone + oxidized [NADPH--hemoprotein reductase] + 2 H2O + H(+). It catalyses the reaction 3-dehydro-6-deoxoteasterone + 2 reduced [NADPH--hemoprotein reductase] + 2 O2 = 3-dehydroteasterone + 2 oxidized [NADPH--hemoprotein reductase] + 3 H2O + 2 H(+). The catalysed reaction is 6-deoxocastasterone + 2 reduced [NADPH--hemoprotein reductase] + 2 O2 = castasterone + 2 oxidized [NADPH--hemoprotein reductase] + 3 H2O + 2 H(+). It carries out the reaction 6-deoxoteasterone + 2 reduced [NADPH--hemoprotein reductase] + 2 O2 = teasterone + 2 oxidized [NADPH--hemoprotein reductase] + 3 H2O + 2 H(+). The enzyme catalyses 6-deoxotyphasterol + 2 reduced [NADPH--hemoprotein reductase] + 2 O2 = typhasterol + 2 oxidized [NADPH--hemoprotein reductase] + 3 H2O + 2 H(+). The protein operates within plant hormone biosynthesis; brassinosteroid biosynthesis. In terms of biological role, involved in reduction steps of the biosynthesis of plant campesterol-derivative steroids, ending to castasterone (CS) but missing brassinolide (BL). Catalyzes the C6-oxidation step in brassinosteroids biosynthesis; the conversion of 6-deoxoteasterone (6-deoxoTE) to teasterone (TE), 3-dehydro-6-deoxoteasterone (6-deoxo3DT, 6-deoxo-3-DHT) to 3-dehydroteasterone (3DT, 3-DHT), 6-deoxotyphasterol (6-deoxoTY) to typhasterol (TY) and of 6-deoxocastasterone (6-deoxoCS) to castasterone (CS). In Brachypodium distachyon (Purple false brome), this protein is Cytochrome P450 85A1.